The primary structure comprises 4307 residues: Cytoplasmic dynein 2 heavy chain 1 (4307 aa).

A stem region spans residues 1–1650 (MANGTADVRK…CVQMVDSEFQ (1650 aa)). 145 to 152 (LGIVLRRS) contacts ATP. The stretch at 1074–1103 (NTLDKSAKLIKEKKIEFDDLEVTRKKLVDD) forms a coiled coil. 4 AAA regions span residues 1651-1875 (YTYE…VLRG), 1938-2161 (ELSA…KQND), 2251-2505 (ADDF…WVLG), and 2617-2863 (HYGR…ESCK). ATP-binding positions include 1689–1696 (GPAGTGKT), 1979–1986 (GPSGAGKS), 2291–2298 (GPEGCGKG), and 2655–2662 (GRSGVGRR). Positions 2881-3169 (AISSSKKKEL…AEVSKAQETI (289 aa)) are stalk. 3 coiled-coil regions span residues 2897 to 2982 (LQAG…KEVQ), 3109 to 3200 (LETE…LATL), and 3408 to 3442 (IQHE…SLLE). AAA regions lie at residues 3244–3473 (LCTE…LIQE) and 3690–3905 (MALF…IIDR).

The protein belongs to the dynein heavy chain family. As to quaternary structure, the cytoplasmic dynein complex 2 is probably composed by a heavy chain DYNC2H1 homodimer and a number of DYNC2LI1 light intermediate chains.

The protein resides in the cytoplasm. Its subcellular location is the cytoskeleton. It localises to the cilium axoneme. It is found in the cell membrane. Its function is as follows. May function as a motor for intraflagellar retrograde transport. Functions in cilia biogenesis. May play a role in transport between endoplasmic reticulum and Golgi or organization of the Golgi in cells. This chain is Cytoplasmic dynein 2 heavy chain 1 (DYNC2H1), found in Homo sapiens (Human).